Here is a 556-residue protein sequence, read N- to C-terminus: 2-succinyl-5-enolpyruvyl-6-hydroxy-3-cyclohexene-1-carboxylate synthase (556 aa).

It belongs to the TPP enzyme family. MenD subfamily. As to quaternary structure, homodimer. The cofactor is Mg(2+). Requires Mn(2+) as cofactor. Thiamine diphosphate serves as cofactor.

It catalyses the reaction isochorismate + 2-oxoglutarate + H(+) = 5-enolpyruvoyl-6-hydroxy-2-succinyl-cyclohex-3-ene-1-carboxylate + CO2. Its pathway is quinol/quinone metabolism; 1,4-dihydroxy-2-naphthoate biosynthesis; 1,4-dihydroxy-2-naphthoate from chorismate: step 2/7. It participates in quinol/quinone metabolism; menaquinone biosynthesis. In terms of biological role, catalyzes the thiamine diphosphate-dependent decarboxylation of 2-oxoglutarate and the subsequent addition of the resulting succinic semialdehyde-thiamine pyrophosphate anion to isochorismate to yield 2-succinyl-5-enolpyruvyl-6-hydroxy-3-cyclohexene-1-carboxylate (SEPHCHC). This Escherichia fergusonii (strain ATCC 35469 / DSM 13698 / CCUG 18766 / IAM 14443 / JCM 21226 / LMG 7866 / NBRC 102419 / NCTC 12128 / CDC 0568-73) protein is 2-succinyl-5-enolpyruvyl-6-hydroxy-3-cyclohexene-1-carboxylate synthase.